The following is a 355-amino-acid chain: Chemerin-like receptor 2 (355 aa).

Residues 1–41 lie on the Extracellular side of the membrane; it reads MEDLEETLFEEFENYSYDLDYYSLESDLEEKVQLGVVHWVS. Residue Asn14 is glycosylated (N-linked (GlcNAc...) asparagine). Residues 42–62 form a helical membrane-spanning segment; that stretch reads LVLYCLAFVLGIPGNAIVIWF. Residues 63-73 lie on the Cytoplasmic side of the membrane; that stretch reads TGFKWKKTVTT. A helical transmembrane segment spans residues 74–94; sequence LWFLNLAIADFIFLLFLPLYI. Topologically, residues 95–112 are extracellular; it reads SYVAMNFHWPFGIWLCKA. Residues Cys110 and Cys187 are joined by a disulfide bond. A helical transmembrane segment spans residues 113 to 133; that stretch reads NSFTAQLNMFASVFFLTVISL. At 134–154 the chain is on the cytoplasmic side; the sequence is DHYIHLIHPVLSHRHRTLKNS. A helical transmembrane segment spans residues 155 to 175; it reads LIVIIFIWLLASLIGGPALYF. Residues 176–210 are Extracellular-facing; that stretch reads RDTVEFNNHTLCYNNFQKHDPDLTLIRHHVLTWVK. The helical transmembrane segment at 211-231 threads the bilayer; sequence FIIGYLFPLLTMSICYLCLIF. The Cytoplasmic portion of the chain corresponds to 232 to 247; the sequence is KVKKRSILISSRHFWT. The helical transmembrane segment at 248 to 268 threads the bilayer; sequence ILVVVVAFVVCWTPYHLFSIW. Residues 269–286 are Extracellular-facing; that stretch reads ELTIHHNSYSHHVMQAGI. The chain crosses the membrane as a helical span at residues 287 to 307; the sequence is PLSTGLAFLNSCLNPILYVLI. At 308–355 the chain is on the cytoplasmic side; it reads SKKFQARFRSSVAEILKYTLWEVSCSGTVSEQLRNSETKNLCLLETAQ.

It belongs to the chemokine-like receptor (CMKLR) family. As to expression, expressed in hippocampus.

The protein resides in the cell membrane. Its function is as follows. Receptor for chemoattractant adipokine chemerin/RARRES2 suggesting a role for this receptor in the regulation of inflammation and energy homesotasis. Signals mainly via beta-arrestin pathway. Binding of RARRES2 activates weakly G proteins, calcium mobilization and MAPK1/MAPK3 (ERK1/2) phosphorylation too. Also acts as a receptor for TAFA1, mediates its effects on neuronal stem-cell proliferation and differentiation via the activation of ROCK/ERK and ROCK/STAT3 signaling pathway. (Microbial infection) Coreceptor for HIV-1. The sequence is that of Chemerin-like receptor 2 from Homo sapiens (Human).